A 118-amino-acid chain; its full sequence is Large ribosomal subunit protein uL18 (118 aa).

The protein belongs to the universal ribosomal protein uL18 family. In terms of assembly, part of the 50S ribosomal subunit; part of the 5S rRNA/L5/L18/L25 subcomplex. Contacts the 5S and 23S rRNAs.

This is one of the proteins that bind and probably mediate the attachment of the 5S RNA into the large ribosomal subunit, where it forms part of the central protuberance. This Sulfurovum sp. (strain NBC37-1) protein is Large ribosomal subunit protein uL18.